The sequence spans 292 residues: Release factor glutamine methyltransferase (292 aa).

Residues 126 to 130, aspartate 157, tryptophan 184, and asparagine 198 each bind S-adenosyl-L-methionine; that span reads GTGTG. 198-201 is a binding site for substrate; the sequence is NPPY.

It belongs to the protein N5-glutamine methyltransferase family. PrmC subfamily.

The enzyme catalyses L-glutaminyl-[peptide chain release factor] + S-adenosyl-L-methionine = N(5)-methyl-L-glutaminyl-[peptide chain release factor] + S-adenosyl-L-homocysteine + H(+). Methylates the class 1 translation termination release factors RF1/PrfA and RF2/PrfB on the glutamine residue of the universally conserved GGQ motif. The chain is Release factor glutamine methyltransferase from Haemophilus influenzae (strain ATCC 51907 / DSM 11121 / KW20 / Rd).